Here is a 62-residue protein sequence, read N- to C-terminus: MKTAEIKGLSVEDLKQRIVAEKENLHKLKFAHAISPIENPMKISHTRKLIAQLSTELTAKSK.

This sequence belongs to the universal ribosomal protein uL29 family.

The protein is Large ribosomal subunit protein uL29 of Cytophaga hutchinsonii (strain ATCC 33406 / DSM 1761 / CIP 103989 / NBRC 15051 / NCIMB 9469 / D465).